Consider the following 84-residue polypeptide: Small ribosomal subunit protein uS17 (84 aa).

The protein belongs to the universal ribosomal protein uS17 family. As to quaternary structure, part of the 30S ribosomal subunit.

Its function is as follows. One of the primary rRNA binding proteins, it binds specifically to the 5'-end of 16S ribosomal RNA. The polypeptide is Small ribosomal subunit protein uS17 (Photobacterium profundum (strain SS9)).